The sequence spans 79 residues: Acyl carrier protein (79 aa).

In terms of domain architecture, Carrier spans S2–Q77. S37 carries the O-(pantetheine 4'-phosphoryl)serine modification.

This sequence belongs to the acyl carrier protein (ACP) family. Post-translationally, 4'-phosphopantetheine is transferred from CoA to a specific serine of apo-ACP by AcpS. This modification is essential for activity because fatty acids are bound in thioester linkage to the sulfhydryl of the prosthetic group.

It localises to the cytoplasm. It functions in the pathway lipid metabolism; fatty acid biosynthesis. Carrier of the growing fatty acid chain in fatty acid biosynthesis. The chain is Acyl carrier protein from Verminephrobacter eiseniae (strain EF01-2).